Here is a 258-residue protein sequence, read N- to C-terminus: MEMKKKINMELKNRAPEEVTELVLDNCLCVNGEIEGLNDTFKELEFLSMANVELSSLARLPSLNKLRKLELSDNIISGGLEVLAEKCPNLTYLNLSGNKIKDLSTVEALQNLKNLKSLDLFNCEITNLEDYRESIFELLQQITYLDGFDQEDNEAPDSEEEEEDEDGDEDEEDEEEDEAGPPEGYEDEDEDEDEAGSEVGEGEEEVGLSYLMKEEIQDEEDDDDYVDEGEEEEEEEEEGPRGEKRKRDAEDDGEEDDD.

M1 is subject to N-acetylmethionine. LRR repeat units lie at residues 18-38 (EVTE…EGLN), 43-64 (ELEF…PSLN), 65-87 (KLRK…AEKC), and 89-110 (NLTY…EALQ). K68 participates in a covalent cross-link: Glycyl lysine isopeptide (Lys-Gly) (interchain with G-Cter in SUMO2). In terms of domain architecture, LRRCT spans 123-161 (CEITNLEDYRESIFELLQQITYLDGFDQEDNEAPDSEEE). Composition is skewed to acidic residues over residues 149 to 206 (DQED…EEEV) and 216 to 238 (IQDE…EEEE). The tract at residues 149-258 (DQEDNEAPDS…AEDDGEEDDD (110 aa)) is disordered. The segment at 205–258 (EVGLSYLMKEEIQDEEDDDDYVDEGEEEEEEEEEGPRGEKRKRDAEDDGEEDDD) is ZID domain. Positions 239–249 (GPRGEKRKRDA) are enriched in basic and acidic residues.

This sequence belongs to the ANP32 family. As to quaternary structure, component of a SWR1-like complex, composed of EP400, KAT5/TIP60, TRRAP, BRD8, RUVBL1, RUVBL2, ING3 and ANP32E; the complex does not contain SRCAP. Interacts with H2A.Z/H2AZ1. Interacts with the importin alpha KPNA1 and KPNA2. Post-translationally, phosphorylated. The phosphorylation is nuclear localization signal (NLS)-dependent.

The protein localises to the cytoplasm. The protein resides in the nucleus. Histone chaperone that specifically mediates the genome-wide removal of histone H2A.Z/H2AZ1 from the nucleosome: removes H2A.Z/H2AZ1 from its normal sites of deposition, especially from enhancer and insulator regions. Not involved in deposition of H2A.Z/H2AZ1 in the nucleosome. May stabilize the evicted H2A.Z/H2AZ1-H2B dimer, thus shifting the equilibrium towards dissociation and the off-chromatin state. Inhibits activity of protein phosphatase 2A (PP2A). Does not inhibit protein phosphatase 1. May play a role in cerebellar development and synaptogenesis. The protein is Acidic leucine-rich nuclear phosphoprotein 32 family member E (Anp32e) of Rattus norvegicus (Rat).